The sequence spans 129 residues: Small ribosomal subunit protein uS9 (129 aa).

The protein belongs to the universal ribosomal protein uS9 family.

The sequence is that of Small ribosomal subunit protein uS9 from Wolinella succinogenes (strain ATCC 29543 / DSM 1740 / CCUG 13145 / JCM 31913 / LMG 7466 / NCTC 11488 / FDC 602W) (Vibrio succinogenes).